The chain runs to 253 residues: tRNA pseudouridine synthase A (253 aa).

Aspartate 53 functions as the Nucleophile in the catalytic mechanism. Substrate is bound at residue tyrosine 112.

It belongs to the tRNA pseudouridine synthase TruA family. In terms of assembly, homodimer.

The catalysed reaction is uridine(38/39/40) in tRNA = pseudouridine(38/39/40) in tRNA. Functionally, formation of pseudouridine at positions 38, 39 and 40 in the anticodon stem and loop of transfer RNAs. This chain is tRNA pseudouridine synthase A, found in Lactococcus lactis subsp. cremoris (strain MG1363).